The chain runs to 361 residues: 3-dehydroquinate synthase (361 aa).

NAD(+)-binding positions include 107–111 (GVIGD), 131–132 (TS), lysine 144, and lysine 153. The Zn(2+) site is built by glutamate 186, histidine 251, and histidine 268.

It belongs to the sugar phosphate cyclases superfamily. Dehydroquinate synthase family. NAD(+) serves as cofactor. The cofactor is Co(2+). Zn(2+) is required as a cofactor.

Its subcellular location is the cytoplasm. The catalysed reaction is 7-phospho-2-dehydro-3-deoxy-D-arabino-heptonate = 3-dehydroquinate + phosphate. The protein operates within metabolic intermediate biosynthesis; chorismate biosynthesis; chorismate from D-erythrose 4-phosphate and phosphoenolpyruvate: step 2/7. Its function is as follows. Catalyzes the conversion of 3-deoxy-D-arabino-heptulosonate 7-phosphate (DAHP) to dehydroquinate (DHQ). In Synechocystis sp. (strain ATCC 27184 / PCC 6803 / Kazusa), this protein is 3-dehydroquinate synthase.